The primary structure comprises 813 residues: Calpain-7 (813 aa).

N-acetylmethionine is present on M1. Position 95 is a phosphothreonine (T95). In terms of domain architecture, Calpain catalytic spans 232 to 540 (RERFAYPMPF…YDVIYLSWNP (309 aa)). Residues C290, H458, and N478 contribute to the active site. Residues 541–701 (GLLKESTCIH…INGKWSGQSA (161 aa)) form a domain III region. The interval 702-813 (GGCGNFQETH…VIPIKTTQLQ (112 aa)) is domain N.

It belongs to the peptidase C2 family.

Its subcellular location is the nucleus. Calcium-regulated non-lysosomal thiol-protease. This chain is Calpain-7 (CAPN7), found in Sus scrofa (Pig).